The sequence spans 210 residues: Leucyl/phenylalanyl-tRNA--protein transferase (210 aa).

The protein belongs to the L/F-transferase family.

The protein localises to the cytoplasm. It catalyses the reaction N-terminal L-lysyl-[protein] + L-leucyl-tRNA(Leu) = N-terminal L-leucyl-L-lysyl-[protein] + tRNA(Leu) + H(+). The catalysed reaction is N-terminal L-arginyl-[protein] + L-leucyl-tRNA(Leu) = N-terminal L-leucyl-L-arginyl-[protein] + tRNA(Leu) + H(+). It carries out the reaction L-phenylalanyl-tRNA(Phe) + an N-terminal L-alpha-aminoacyl-[protein] = an N-terminal L-phenylalanyl-L-alpha-aminoacyl-[protein] + tRNA(Phe). Its function is as follows. Functions in the N-end rule pathway of protein degradation where it conjugates Leu, Phe and, less efficiently, Met from aminoacyl-tRNAs to the N-termini of proteins containing an N-terminal arginine or lysine. In Ruegeria pomeroyi (strain ATCC 700808 / DSM 15171 / DSS-3) (Silicibacter pomeroyi), this protein is Leucyl/phenylalanyl-tRNA--protein transferase.